We begin with the raw amino-acid sequence, 705 residues long: Translation factor GUF1 homolog, mitochondrial (705 aa).

Residues 1–20 (MVCHRYLLGLGASTLCLRRL) constitute a mitochondrion transit peptide. Residues 72 to 92 (PVEDNGTTNLTGTGEATSETG) form a disordered region. Residues 76–90 (NGTTNLTGTGEATSE) are compositionally biased toward polar residues. The tr-type G domain occupies 105–288 (NRMRNFCIIA…AVVERIPPPK (184 aa)). GTP is bound by residues 114 to 121 (AHVDHGKS), 181 to 185 (DTPGH), and 235 to 238 (NKID).

Belongs to the TRAFAC class translation factor GTPase superfamily. Classic translation factor GTPase family. LepA subfamily.

The protein localises to the mitochondrion inner membrane. It carries out the reaction GTP + H2O = GDP + phosphate + H(+). In terms of biological role, promotes mitochondrial protein synthesis. May act as a fidelity factor of the translation reaction, by catalyzing a one-codon backward translocation of tRNAs on improperly translocated ribosomes. Binds to mitochondrial ribosomes in a GTP-dependent manner. The chain is Translation factor GUF1 homolog, mitochondrial from Babesia bovis.